Reading from the N-terminus, the 287-residue chain is MALGLLIAVPLLLQAAPPGAAHYEMLGTCRMICDPYSVAPAGGPAGAKAPPPGPSTAALEVMQDLSANPPPPFIQGPKGDPGRPGKPGPRGPPGEPGPPGPRGPPGEKGDSGRPGLPGLQLTTSAAGGVGVVSGGTGGGGDTEGEVTSALSAAFSGPKIAFYVGLKSPHEGYEVLKFDDVVTNLGNHYDPTTGKFSCQVRGIYFFTYHILMRGGDGTSMWADLCKNGQVRASAIAQDADQNYDYASNSVVLHLDSGDEVYVKLDGGKAHGGNNNKYSTFSGFLLYPD.

A signal peptide spans methionine 1–alanine 21. The segment at leucine 65–glycine 144 is disordered. In terms of domain architecture, Collagen-like spans glycine 76–glycine 118. Residues proline 84–proline 104 show a composition bias toward pro residues. The span at glycine 127–aspartate 141 shows a compositional bias: gly residues. Residues phenylalanine 154–aspartate 287 enclose the C1q domain.

In terms of assembly, forms homotrimers which can further assemble to form higher-order oligomeric complexes. Interacts with ADGRB3. May interact with ERFE. Forms heterooligomers with C1QL3 and C1QL4, when proteins are coexpressed; this interaction does not occur after secretion. Glycosylated, but not with N-linked glycans. As to expression, highest expression in eye, followed by placenta and brain, intermediate expression in adipose tissue and lowest expression in lymph node and testis.

It localises to the secreted. Functionally, may regulate the number of excitatory synapses that are formed on hippocampus neurons. Has no effect on inhibitory synapses. This chain is Complement C1q-like protein 2 (C1ql2), found in Mus musculus (Mouse).